The primary structure comprises 387 residues: ADP,ATP carrier protein 2, mitochondrial (387 aa).

A mitochondrion-targeting transit peptide spans 1-77 (MADQANQPTV…PVMPTPLFAN (77 aa)). 3 Solcar repeats span residues 85–178 (KNFM…FKRL), 190–282 (KWFA…IKPV), and 290–376 (DNFF…LQIL). 5 consecutive transmembrane segments (helical) span residues 87–114 (FMID…VKLL), 155–179 (TANV…KRLF), 188–208 (YWKW…SSLF), 258–279 (FNIS…YDSI), and 293–313 (FASF…SYPI). Positions 160 and 172 each coordinate ADP. Arginine 317 provides a ligand contact to ADP. Residues 317–322 (RRRMMM) form an important for transport activity region. The Nucleotide carrier signature motif motif lies at 317–322 (RRRMMM). A helical transmembrane segment spans residues 353–373 (AGANILRAIAGAGVLSGYDQL).

Belongs to the mitochondrial carrier (TC 2.A.29) family. As to quaternary structure, monomer.

It is found in the mitochondrion inner membrane. It catalyses the reaction ADP(in) + ATP(out) = ADP(out) + ATP(in). With respect to regulation, the matrix-open state (m-state) is inhibited by the membrane-permeable bongkrekic acid (BKA). The cytoplasmic-open state (c-state) is inhibited by the membrane-impermeable toxic inhibitor carboxyatractyloside (CATR). Functionally, ADP:ATP antiporter that mediates import of ADP into the mitochondrial matrix for ATP synthesis, and export of ATP out to fuel the cell. Cycles between the cytoplasmic-open state (c-state) and the matrix-open state (m-state): operates by the alternating access mechanism with a single substrate-binding site intermittently exposed to either the cytosolic (c-state) or matrix (m-state) side of the inner mitochondrial membrane. This Zea mays (Maize) protein is ADP,ATP carrier protein 2, mitochondrial (ANT2).